The sequence spans 624 residues: Anti-CBASS protein Acb1 (624 aa).

Tyrosine 106 is a 3',3'-cGAMP binding site. A 3',3'-cUAMP-binding site is contributed by tyrosine 106. Residues histidine 503, threonine 505, histidine 581, and threonine 583 contribute to the active site. Tryptophan 617 provides a ligand contact to 3',3'-cGAMP. Residue tryptophan 617 participates in 3',3'-cUAMP binding.

Belongs to the anti-CBASS protein Acb1 family.

The enzyme catalyses 3',3'-cUAMP + H2O = U[3'-5']pAp[3'] + H(+). It carries out the reaction 3',3',3'-c-tri-AMP + H2O = A[3'-5']pA[3'-5']pAp[3'] + H(+). It catalyses the reaction 3',3',3'-cAAG + H2O = G[3'-5']pA[3'-5']pAp[3'] + H(+). The catalysed reaction is 3',3',3'-cAAG + H2O = A[3'-5']pG[3'-5']pAp[3'] + H(+). The enzyme catalyses 3',3'-cGAMP + H2O = G[3'-5']pAp[3'] + H(+). Counteracts or regulates the endogenous CBASS antiviral defense system. Phosphodiesterase that enables metal-independent hydrolysis of the host cyclic di- and trinucleotide CBASS signals such as 3'3'-cGAMP, 3'3'cUA, and 3'3'3'-cAAA. The protein is Anti-CBASS protein Acb1 of Sphingomonas paeninsulae.